A 217-amino-acid polypeptide reads, in one-letter code: Octanoyltransferase (217 aa).

Positions 31 to 206 (KSVMDEAWLL…ELVSRLGYAE (176 aa)) constitute a BPL/LPL catalytic domain. Substrate-binding positions include 70 to 77 (RGGQVTYH), 137 to 139 (SLG), and 150 to 152 (GLA). C168 serves as the catalytic Acyl-thioester intermediate.

Belongs to the LipB family.

It localises to the cytoplasm. It carries out the reaction octanoyl-[ACP] + L-lysyl-[protein] = N(6)-octanoyl-L-lysyl-[protein] + holo-[ACP] + H(+). It functions in the pathway protein modification; protein lipoylation via endogenous pathway; protein N(6)-(lipoyl)lysine from octanoyl-[acyl-carrier-protein]: step 1/2. Catalyzes the transfer of endogenously produced octanoic acid from octanoyl-acyl-carrier-protein onto the lipoyl domains of lipoate-dependent enzymes. Lipoyl-ACP can also act as a substrate although octanoyl-ACP is likely to be the physiological substrate. This is Octanoyltransferase from Pseudomonas aeruginosa (strain UCBPP-PA14).